The chain runs to 210 residues: Protein GrpE (210 aa).

The interval 1–71 is disordered; it reads MSEKDQSVNN…DTKIKELEKL (71 aa). The span at 11 to 23 shows a compositional bias: acidic residues; it reads TEEDFNVETEDNQ. Residues 24 to 35 are compositionally biased toward polar residues; sequence NDTNIENSVSNT. The span at 36–46 shows a compositional bias: low complexity; it reads DNSEANASDSE. Positions 47-60 are enriched in acidic residues; it reads NNSEESIKDEESES. Residues 61-71 show a composition bias toward basic and acidic residues; the sequence is QDTKIKELEKL.

Belongs to the GrpE family. Homodimer.

The protein localises to the cytoplasm. In terms of biological role, participates actively in the response to hyperosmotic and heat shock by preventing the aggregation of stress-denatured proteins, in association with DnaK and GrpE. It is the nucleotide exchange factor for DnaK and may function as a thermosensor. Unfolded proteins bind initially to DnaJ; upon interaction with the DnaJ-bound protein, DnaK hydrolyzes its bound ATP, resulting in the formation of a stable complex. GrpE releases ADP from DnaK; ATP binding to DnaK triggers the release of the substrate protein, thus completing the reaction cycle. Several rounds of ATP-dependent interactions between DnaJ, DnaK and GrpE are required for fully efficient folding. The protein is Protein GrpE of Staphylococcus epidermidis (strain ATCC 35984 / DSM 28319 / BCRC 17069 / CCUG 31568 / BM 3577 / RP62A).